A 466-amino-acid polypeptide reads, in one-letter code: Soluble pyridine nucleotide transhydrogenase (466 aa).

FAD is bound at residue 36-45 (ERYHNVGGGC).

This sequence belongs to the class-I pyridine nucleotide-disulfide oxidoreductase family. Requires FAD as cofactor.

The protein localises to the cytoplasm. The enzyme catalyses NAD(+) + NADPH = NADH + NADP(+). In terms of biological role, conversion of NADPH, generated by peripheral catabolic pathways, to NADH, which can enter the respiratory chain for energy generation. This is Soluble pyridine nucleotide transhydrogenase from Salmonella paratyphi C (strain RKS4594).